A 484-amino-acid polypeptide reads, in one-letter code: Notoamide biosynthesis transcriptional activator notL (484 aa).

A DNA-binding region (zn(2)-C6 fungal-type) is located at residues 33–60 (CQSCATSKIKCPKEKTSCSKCQARGIEC). 2 disordered regions span residues 70-154 (RRRE…NNSV) and 363-387 (GGGESDTGQRPATSMIPNGKDQMRP). Residues 76 to 122 (TGHPTSCTSTSTTANSSSSSSRSSNSSSSSSTSPPSSSSSLSSNPEP) show a composition bias toward low complexity. The segment covering 123–133 (TSDKDLPRPRS) has biased composition (basic and acidic residues). Composition is skewed to polar residues over residues 139–154 (ANSTEPSILPPANNSV) and 368–378 (DTGQRPATSMI).

It is found in the nucleus. Its function is as follows. Transcription factor that probably regulates the expression of the gene cluster that mediates the biosynthesis of notoamide, a fungal indole alkaloid that belongs to a family of natural products containing a characteristic bicyclo[2.2.2]diazaoctane core. The protein is Notoamide biosynthesis transcriptional activator notL of Aspergillus sp. (strain MF297-2).